A 668-amino-acid polypeptide reads, in one-letter code: Threonine--tRNA ligase (668 aa).

The TGS domain occupies 1 to 64 (MSQSVSLTFP…TDGKIEIITR (64 aa)). Positions 245–553 (DHRKLGREMD…LIENFAGHMP (309 aa)) are catalytic. Zn(2+) contacts are provided by C347, H398, and H530.

Belongs to the class-II aminoacyl-tRNA synthetase family. In terms of assembly, homodimer. Zn(2+) serves as cofactor.

The protein localises to the cytoplasm. The catalysed reaction is tRNA(Thr) + L-threonine + ATP = L-threonyl-tRNA(Thr) + AMP + diphosphate + H(+). Its function is as follows. Catalyzes the attachment of threonine to tRNA(Thr) in a two-step reaction: L-threonine is first activated by ATP to form Thr-AMP and then transferred to the acceptor end of tRNA(Thr). Also edits incorrectly charged L-seryl-tRNA(Thr). The sequence is that of Threonine--tRNA ligase from Rhizobium etli (strain ATCC 51251 / DSM 11541 / JCM 21823 / NBRC 15573 / CFN 42).